The primary structure comprises 349 residues: Fe(3+) ions import ATP-binding protein FbpC (349 aa).

An ABC transporter domain is found at 4 to 236 (LELHHIGKSY…PVDEPTATFL (233 aa)). 36–43 (GPSGSGKT) provides a ligand contact to ATP.

It belongs to the ABC transporter superfamily. Fe(3+) ion importer (TC 3.A.1.10) family. In terms of assembly, the complex is composed of two ATP-binding proteins (FbpC), two transmembrane proteins (FbpB) and a solute-binding protein (FbpA).

Its subcellular location is the cell inner membrane. It catalyses the reaction Fe(3+)(out) + ATP + H2O = Fe(3+)(in) + ADP + phosphate + H(+). Its function is as follows. Part of the ABC transporter complex FbpABC involved in Fe(3+) ions import. Responsible for energy coupling to the transport system. This Yersinia pestis bv. Antiqua (strain Antiqua) protein is Fe(3+) ions import ATP-binding protein FbpC.